Consider the following 292-residue polypeptide: Zinc finger protein OZF (292 aa).

10 C2H2-type zinc fingers span residues 16-38 (FACK…EHFH), 44-66 (FECN…QSTH), 72-94 (FECS…QKIH), 100-122 (FECK…QRTH), 128-150 (FICK…EKIH), 156-178 (FKCN…QNIH), 184-206 (YECN…VRIH), 212-234 (YECN…VRSH), 240-262 (YGCN…LRIH), and 268-290 (YQCS…QKIH). Residues K28, K51, and K56 each participate in a glycyl lysine isopeptide (Lys-Gly) (interchain with G-Cter in SUMO2) cross-link. Glycyl lysine isopeptide (Lys-Gly) (interchain with G-Cter in SUMO) cross-links involve residues K157 and K169. Residue K173 forms a Glycyl lysine isopeptide (Lys-Gly) (interchain with G-Cter in SUMO2) linkage. Positions 212 to 292 (YECNVCGKAF…HIRHQKIHTH (81 aa)) are interaction with TERF2IP.

Belongs to the krueppel C2H2-type zinc-finger protein family. Binds DNA. Interacts with SUMO conjugating enzyme UBC9/UBE2I. Interacts with the telomeric protein TERF2IP. Expressed in heart, brain, liver, lung, skeletal muscle and kidney, and at much lower level in spleen and testicle. Expressed in lactating mammary gland.

It is found in the nucleus. The chain is Zinc finger protein OZF (Znf146) from Mus musculus (Mouse).